Consider the following 289-residue polypeptide: MSNRPELLAPPEIFYDDTEARKYTSSSRIVEIQAKLSERALELLALPEDGVPRFLLDIGCGSGLSGETLSEDGHHWIGLDISASMLHVAVEREVEGDLLLGDMGQGLGLRSGVIDGAISISAVQWLCNADKSSHEPRLRLKAFFGSLYRCLSRGARAVFQVYPENIAQRELILRQALQAGFGGGLVVDYPHSTKKRKEFLVLTCGTVQTSIQTSKNEYDESCSEDDNSDDEESEEVGVSDRNRPRKRQRTNTKVKGREWVLRKKEQSRRKGKNVPADSKFTSRKRRTRF.

The interval 215-289 is disordered; that stretch reads KNEYDESCSE…FTSRKRRTRF (75 aa). The span at 219–237 shows a compositional bias: acidic residues; that stretch reads DESCSEDDNSDDEESEEVG. Over residues 243 to 254 the composition is skewed to basic residues; that stretch reads RPRKRQRTNTKV. The span at 255–264 shows a compositional bias: basic and acidic residues; sequence KGREWVLRKK. The short motif at 268–275 is the Nuclear localization signal element; the sequence is RRKGKNVP.

This sequence belongs to the class I-like SAM-binding methyltransferase superfamily. BUD23/WBSCR22 family. Expressed in seedlings, roots and flowers.

It localises to the nucleus. Its subcellular location is the nucleoplasm. It is found in the cytoplasm. The protein resides in the perinuclear region. The protein localises to the nucleolus. It carries out the reaction guanosine(1575) in yeast 18S rRNA + S-adenosyl-L-methionine = N(7)-methylguanosine(1575) in yeast 18S rRNA + S-adenosyl-L-homocysteine. Functionally, essential protein. S-adenosyl-L-methionine-dependent methyltransferase that specifically methylates the N(7) position of a guanine in 18S rRNA. Requires the methyltransferase adapter protein TRM112 for full rRNA methyltransferase activity. Important for biogenesis end export of the 40S ribosomal subunit independent on its methyltransferase activity. Involved in the pre-rRNA processing steps in the nucleolus leading to small-subunit rRNA production independently of its RNA-modifying catalytic activity. Supports cell proliferation. Required for the initiation of lateral root primordia formation and for the root apical meristem (RAM) organization as well as for leaves development. During callus formation from hypocotyl and root explants, required for the initial stage of reactivation of cell proliferation in the hypocotyl stele. Involved in leaf polarity establishment by functioning cooperatively with AS2 to repress abaxial genes ARF3, ARF4, KAN1, KAN2, YAB1 and YAB5, and the knox homeobox genes KNAT1, KNAT2, KNAT6, and STM to promote adaxial development in leaf primordia at shoot apical meristems at high temperatures. This Arabidopsis thaliana (Mouse-ear cress) protein is 18S rRNA (guanine-N(7))-methyltransferase RID2.